We begin with the raw amino-acid sequence, 404 residues long: Tryptophan synthase beta chain (404 aa).

The residue at position 98 (Lys-98) is an N6-(pyridoxal phosphate)lysine.

The protein belongs to the TrpB family. Tetramer of two alpha and two beta chains. The cofactor is pyridoxal 5'-phosphate.

The enzyme catalyses (1S,2R)-1-C-(indol-3-yl)glycerol 3-phosphate + L-serine = D-glyceraldehyde 3-phosphate + L-tryptophan + H2O. It participates in amino-acid biosynthesis; L-tryptophan biosynthesis; L-tryptophan from chorismate: step 5/5. In terms of biological role, the beta subunit is responsible for the synthesis of L-tryptophan from indole and L-serine. The polypeptide is Tryptophan synthase beta chain (Acidiphilium cryptum (strain JF-5)).